Consider the following 253-residue polypeptide: 1-(5-phosphoribosyl)-5-[(5-phosphoribosylamino)methylideneamino] imidazole-4-carboxamide isomerase (253 aa).

Asp8 acts as the Proton acceptor in catalysis. Asp131 (proton donor) is an active-site residue.

Belongs to the HisA/HisF family.

The protein localises to the cytoplasm. The enzyme catalyses 1-(5-phospho-beta-D-ribosyl)-5-[(5-phospho-beta-D-ribosylamino)methylideneamino]imidazole-4-carboxamide = 5-[(5-phospho-1-deoxy-D-ribulos-1-ylimino)methylamino]-1-(5-phospho-beta-D-ribosyl)imidazole-4-carboxamide. The protein operates within amino-acid biosynthesis; L-histidine biosynthesis; L-histidine from 5-phospho-alpha-D-ribose 1-diphosphate: step 4/9. The polypeptide is 1-(5-phosphoribosyl)-5-[(5-phosphoribosylamino)methylideneamino] imidazole-4-carboxamide isomerase (Polynucleobacter necessarius subsp. necessarius (strain STIR1)).